The sequence spans 1051 residues: Eukaryotic translation initiation factor 3 subunit A (1051 aa).

Residues 92–121 (LKKFIELAEKKVTEAQAKADEIQSSLESAA) adopt a coiled-coil conformation. In terms of domain architecture, PCI spans 339-523 (MTKAASFVLL…GVLTFDTDIF (185 aa)). The stretch at 608-905 (RVLIEKKKEA…EAEARRAARK (298 aa)) forms a coiled coil. Composition is skewed to basic and acidic residues over residues 617–632 (AATD…EETR), 642–664 (EAEK…RDEQ), 794–901 (KEVS…EARR), and 916–926 (AELERPVERTA). 2 disordered regions span residues 617 to 664 (AATD…RDEQ) and 794 to 1051 (KEVS…QQQQ). 2 stretches are compositionally biased toward low complexity: residues 948–961 (KEAA…AAAE) and 1010–1039 (SSSS…SPAP).

The protein belongs to the eIF-3 subunit A family. Component of the eukaryotic translation initiation factor 3 (eIF-3) complex.

It is found in the cytoplasm. Functionally, RNA-binding component of the eukaryotic translation initiation factor 3 (eIF-3) complex, which is involved in protein synthesis of a specialized repertoire of mRNAs and, together with other initiation factors, stimulates binding of mRNA and methionyl-tRNAi to the 40S ribosome. The eIF-3 complex specifically targets and initiates translation of a subset of mRNAs involved in cell proliferation. The protein is Eukaryotic translation initiation factor 3 subunit A (tif32) of Aspergillus fumigatus (strain CBS 144.89 / FGSC A1163 / CEA10) (Neosartorya fumigata).